The primary structure comprises 9439 residues: Extracellular matrix-binding protein ebh (9439 aa).

FIVAR domains follow at residues alanine 1815–alanine 1871, alanine 1901–alanine 1957, alanine 1985–alanine 2041, alanine 2071–glutamate 2127, alanine 2155–alanine 2211, alanine 2241–glutamate 2297, alanine 2325–alanine 2381, alanine 2411–asparagine 2467, aspartate 2488–alanine 2551, alanine 2581–isoleucine 2638, alanine 2665–asparagine 2720, alanine 2748–glutamate 2804, alanine 2832–alanine 2888, alanine 2918–alanine 2974, alanine 3002–alanine 3058, alanine 3088–glutamate 3144, alanine 3172–alanine 3228, alanine 3258–glutamate 3314, aspartate 3335–alanine 3398, alanine 3428–glutamate 3484, alanine 3512–asparagine 3567, isoleucine 3595–serine 3650, alanine 3678–asparagine 3733, serine 3802–lysine 3860, alanine 3928–alanine 3983, alanine 4056–lysine 4114, serine 4182–alanine 4240, alanine 4308–lysine 4365, and valine 4433–alanine 4491. Positions glutamate 2495–asparagine 2507 are enriched in basic and acidic residues. The segment at glutamate 2495 to serine 2514 is disordered. Over residues alanine 2925–glutamine 2938 the composition is skewed to polar residues. The segment at alanine 2925–glutamine 2951 is disordered. Residues leucine 4522–threonine 4542 form a disordered region. An FIVAR 30 domain is found at serine 4559–threonine 4617. Positions leucine 4648–glutamate 4671 are disordered. 14 FIVAR domains span residues alanine 4685 to lysine 4743, alanine 4811 to alanine 4869, alanine 4937 to alanine 4995, alanine 5063 to lysine 5115, alanine 5189 to leucine 5246, leucine 5314 to alanine 5372, alanine 5440 to alanine 5498, alanine 5566 to alanine 5624, alanine 5692 to threonine 5750, aspartate 5818 to leucine 5875, alanine 5943 to alanine 6000, lysine 6068 to threonine 6126, alanine 6194 to isoleucine 6252, and glutamate 6320 to alanine 6378. A compositionally biased stretch (polar residues) spans glutamine 5699–phenylalanine 5712. The disordered stretch occupies residues glutamine 5699–lysine 5719. A disordered region spans residues asparagine 6413 to serine 6434. FIVAR domains lie at alanine 6446–alanine 6504, alanine 6572–alanine 6630, serine 6698–alanine 6755, threonine 6823–glutamate 6877, alanine 6949–isoleucine 7007, serine 7075–alanine 7133, aspartate 7201–alanine 7259, alanine 7327–leucine 7384, alanine 7452–alanine 7510, alanine 7578–isoleucine 7636, alanine 7704–valine 7762, alanine 7830–alanine 7888, valine 7956–alanine 8010, isoleucine 8078–phenylalanine 8137, alanine 8205–leucine 8264, alanine 8332–leucine 8391, lysine 8459–leucine 8518, and alanine 8587–isoleucine 8643. Residues threonine 9306–alanine 9324 form a helical membrane-spanning segment. Basic and acidic residues-rich tracts occupy residues aspartate 9363–serine 9375, glutamate 9386–histidine 9395, and glutamine 9404–glutamine 9413. The interval aspartate 9363–lysine 9439 is disordered. Residues lysine 9414–lysine 9439 show a composition bias toward basic residues.

It localises to the cell membrane. This Staphylococcus epidermidis (strain ATCC 35984 / DSM 28319 / BCRC 17069 / CCUG 31568 / BM 3577 / RP62A) protein is Extracellular matrix-binding protein ebh (ebh).